Reading from the N-terminus, the 52-residue chain is Large ribosomal subunit protein bL33 (52 aa).

This sequence belongs to the bacterial ribosomal protein bL33 family.

This Helicobacter pylori (strain HPAG1) protein is Large ribosomal subunit protein bL33.